The sequence spans 161 residues: Peroxynitrite isomerase 1 (161 aa).

Residues 17 to 23 (GTWTGRG) carry the GXWXGXG motif. His-152 contributes to the heme b binding site.

The protein belongs to the nitrobindin family. In terms of assembly, homodimer. Requires heme b as cofactor.

It catalyses the reaction peroxynitrite = nitrate. It functions in the pathway nitrogen metabolism. Functionally, heme-binding protein able to scavenge peroxynitrite and to protect free L-tyrosine against peroxynitrite-mediated nitration, by acting as a peroxynitrite isomerase that converts peroxynitrite to nitrate. Therefore, this protein likely plays a role in peroxynitrite sensing and in the detoxification of reactive nitrogen and oxygen species (RNS and ROS, respectively). Is able to bind nitric oxide (NO) in vitro, but may act as a sensor of peroxynitrite levels in vivo. In Mycolicibacterium paratuberculosis (strain ATCC BAA-968 / K-10) (Mycobacterium paratuberculosis), this protein is Peroxynitrite isomerase 1.